Here is a 364-residue protein sequence, read N- to C-terminus: Formate dehydrogenase (364 aa).

2 residues coordinate substrate: Val-93 and Asn-119. NAD(+) contacts are provided by residues Arg-174–Ile-175, Asp-195, Pro-230–Gly-234, Thr-256, Asp-282, and His-311–Gly-314.

The protein belongs to the D-isomer specific 2-hydroxyacid dehydrogenase family. FDH subfamily. Homodimer.

It is found in the cytoplasm. It carries out the reaction formate + NAD(+) = CO2 + NADH. Cu(2+), Hg and p-chloromercuribenzoate are strong inhibitors of enzyme activity and Ca(2+), Mg(2+), Zn(2+), Mn(2+), Cd(2+) and Sn(2+) have no effect on activity indicating a cysteine residue in the protein is essential for enzyme activity or to maintain the proper structure of the enzyme. Nitrite and nitrate inhibit some enzyme activity, however cyanide, azide, thiocyanate and cyanate are strong inhibitors of the enzymatic reaction. The inhibition of cyanide is competitive with formate and reversible. Functionally, catalyzes the NAD(+)-dependent oxidation of formate to carbon dioxide. Formate oxidation is the final step in the methanol oxidation pathway in methylotrophic microorganisms. Has a role in the detoxification of exogenous formate in non-methylotrophic organisms. This chain is Formate dehydrogenase, found in Candida boidinii (Yeast).